The primary structure comprises 423 residues: Enolase (423 aa).

A (2R)-2-phosphoglycerate-binding site is contributed by Gln163. Glu205 (proton donor) is an active-site residue. The Mg(2+) site is built by Asp242, Glu285, and Asp312. Residues Lys337, Arg366, Ser367, and Lys388 each coordinate (2R)-2-phosphoglycerate. Lys337 serves as the catalytic Proton acceptor.

The protein belongs to the enolase family. It depends on Mg(2+) as a cofactor.

The protein resides in the cytoplasm. The protein localises to the secreted. Its subcellular location is the cell surface. It catalyses the reaction (2R)-2-phosphoglycerate = phosphoenolpyruvate + H2O. It functions in the pathway carbohydrate degradation; glycolysis; pyruvate from D-glyceraldehyde 3-phosphate: step 4/5. Its function is as follows. Catalyzes the reversible conversion of 2-phosphoglycerate (2-PG) into phosphoenolpyruvate (PEP). It is essential for the degradation of carbohydrates via glycolysis. In Desulforapulum autotrophicum (strain ATCC 43914 / DSM 3382 / VKM B-1955 / HRM2) (Desulfobacterium autotrophicum), this protein is Enolase.